Here is a 148-residue protein sequence, read N- to C-terminus: Large ribosomal subunit protein bL9 (148 aa).

Belongs to the bacterial ribosomal protein bL9 family.

Functionally, binds to the 23S rRNA. The polypeptide is Large ribosomal subunit protein bL9 (Listeria welshimeri serovar 6b (strain ATCC 35897 / DSM 20650 / CCUG 15529 / CIP 8149 / NCTC 11857 / SLCC 5334 / V8)).